Reading from the N-terminus, the 442-residue chain is 6-phospho-alpha-glucosidase 1 (442 aa).

Position 6 to 72 (6 to 72 (FSVLIAGGGS…PEVEFLATTD (67 aa))) interacts with NAD(+). Arg-95 and Asn-149 together coordinate substrate. Cys-171 is a Mn(2+) binding site. The active-site Proton donor is the Asp-172. His-202 lines the Mn(2+) pocket. Tyr-265 serves as the catalytic Proton acceptor. Arg-285 contacts substrate.

Belongs to the glycosyl hydrolase 4 family. Homodimer. May also form homotetramer. It depends on Mn(2+) as a cofactor. Co(2+) is required as a cofactor. Requires Ni(2+) as cofactor. Fe(2+) serves as cofactor. The cofactor is Mg(2+). It depends on NAD(+) as a cofactor.

It catalyses the reaction alpha-maltose 6'-phosphate + H2O = D-glucose 6-phosphate + D-glucose. Its activity is regulated as follows. Is inhibited by EDTA in vitro. Functionally, is probably involved in the catabolism of alpha-glycosides accumulated via a phosphoenolpyruvate-dependent phosphotransferase system (PEP-PTS). Hydrolyzes a wide variety of 6-phospho-alpha-D-glucosides including the five isomeric derivatives of sucrose, i.e. trehalulose-6'-phosphate, turanose-6'-phosphate, maltulose-6'-phosphate, leucrose-6'-phosphate, and palatinose-6'-phosphate, but is not active on sucrose-6-phosphate. Can also hydrolyze maltose-6'-phosphate and methyl-alpha-glucose-6-phosphate, and poorly, trehalose-6-phosphate. Fails to hydrolyze beta-O-linked phosphorylated disaccharides such as cellobiose-6'-phosphate and gentiobiose-6'-phosphate. Does not seem to be involved in maltose catabolism. This is 6-phospho-alpha-glucosidase 1 (simA) from Lacticaseibacillus paracasei (strain ATCC 334 / BCRC 17002 / CCUG 31169 / CIP 107868 / KCTC 3260 / NRRL B-441) (Lactobacillus paracasei).